A 138-amino-acid polypeptide reads, in one-letter code: Ribulose bisphosphate carboxylase small subunit (138 aa).

Belongs to the RuBisCO small chain family. As to quaternary structure, heterohexadecamer of 8 large and 8 small subunits.

Its subcellular location is the plastid. The protein resides in the chloroplast. In terms of biological role, ruBisCO catalyzes two reactions: the carboxylation of D-ribulose 1,5-bisphosphate, the primary event in carbon dioxide fixation, as well as the oxidative fragmentation of the pentose substrate in the photorespiration process. Both reactions occur simultaneously and in competition at the same active site. Although the small subunit is not catalytic it is essential for maximal activity. This is Ribulose bisphosphate carboxylase small subunit from Pyropia dentata (Red alga).